Here is a 77-residue protein sequence, read N- to C-terminus: NADH-ubiquinone oxidoreductase chain 4L (77 aa).

The next 2 membrane-spanning stretches (helical) occupy residues 18-38 (LMFI…LFSG) and 44-64 (MFFY…VVMV).

Belongs to the complex I subunit 4L family.

The protein localises to the mitochondrion membrane. It catalyses the reaction a ubiquinone + NADH + 5 H(+)(in) = a ubiquinol + NAD(+) + 4 H(+)(out). Functionally, core subunit of the mitochondrial membrane respiratory chain NADH dehydrogenase (Complex I) that is believed to belong to the minimal assembly required for catalysis. Complex I functions in the transfer of electrons from NADH to the respiratory chain. The immediate electron acceptor for the enzyme is believed to be ubiquinone. This chain is NADH-ubiquinone oxidoreductase chain 4L (ND4L), found in Ascaris suum (Pig roundworm).